Here is a 430-residue protein sequence, read N- to C-terminus: Phosphomethylpyrimidine synthase (430 aa).

Substrate-binding positions include Asn-67, Met-96, Tyr-125, His-161, 183 to 185, 224 to 227, and Glu-263; these read SRG and DALR. His-267 serves as a coordination point for Zn(2+). Tyr-290 contacts substrate. Residue His-331 coordinates Zn(2+). Residues Cys-406, Cys-409, and Cys-413 each contribute to the [4Fe-4S] cluster site.

It belongs to the ThiC family. In terms of assembly, homodimer. It depends on [4Fe-4S] cluster as a cofactor.

It catalyses the reaction 5-amino-1-(5-phospho-beta-D-ribosyl)imidazole + S-adenosyl-L-methionine = 4-amino-2-methyl-5-(phosphooxymethyl)pyrimidine + CO + 5'-deoxyadenosine + formate + L-methionine + 3 H(+). The protein operates within cofactor biosynthesis; thiamine diphosphate biosynthesis. Catalyzes the synthesis of the hydroxymethylpyrimidine phosphate (HMP-P) moiety of thiamine from aminoimidazole ribotide (AIR) in a radical S-adenosyl-L-methionine (SAM)-dependent reaction. The sequence is that of Phosphomethylpyrimidine synthase from Campylobacter jejuni (strain RM1221).